The following is a 309-amino-acid chain: D-alanine--D-alanine ligase (309 aa).

In terms of domain architecture, ATP-grasp spans 99-304 (KRVLLQAGIP…FPDLVQKIVD (206 aa)). Residue 132-187 (LKELGLPVVIKAPTQGSTIGTFIVREEGELEPAIAGALKYDLSFMAEAYLAGPEIT) participates in ATP binding. Mg(2+) contacts are provided by D258, E271, and N273.

This sequence belongs to the D-alanine--D-alanine ligase family. The cofactor is Mg(2+). Mn(2+) serves as cofactor.

Its subcellular location is the cytoplasm. It carries out the reaction 2 D-alanine + ATP = D-alanyl-D-alanine + ADP + phosphate + H(+). It functions in the pathway cell wall biogenesis; peptidoglycan biosynthesis. Cell wall formation. The protein is D-alanine--D-alanine ligase of Moorella thermoacetica (strain ATCC 39073 / JCM 9320).